The primary structure comprises 122 residues: Large ribosomal subunit protein uL14 (122 aa).

Belongs to the universal ribosomal protein uL14 family. Part of the 50S ribosomal subunit. Forms a cluster with proteins L3 and L19. In the 70S ribosome, L14 and L19 interact and together make contacts with the 16S rRNA in bridges B5 and B8.

In terms of biological role, binds to 23S rRNA. Forms part of two intersubunit bridges in the 70S ribosome. In Chlorobaculum parvum (strain DSM 263 / NCIMB 8327) (Chlorobium vibrioforme subsp. thiosulfatophilum), this protein is Large ribosomal subunit protein uL14.